The primary structure comprises 444 residues: Phosphoglucosamine mutase (444 aa).

The active-site Phosphoserine intermediate is the serine 102. Mg(2+) is bound by residues serine 102, aspartate 241, aspartate 243, and aspartate 245. Residue serine 102 is modified to Phosphoserine.

It belongs to the phosphohexose mutase family. It depends on Mg(2+) as a cofactor. Post-translationally, activated by phosphorylation.

The catalysed reaction is alpha-D-glucosamine 1-phosphate = D-glucosamine 6-phosphate. Its function is as follows. Catalyzes the conversion of glucosamine-6-phosphate to glucosamine-1-phosphate. This chain is Phosphoglucosamine mutase, found in Buchnera aphidicola subsp. Acyrthosiphon pisum (strain 5A).